Here is a 367-residue protein sequence, read N- to C-terminus: Probable protein phosphatase 2C 57 (367 aa).

The interval Met-1–Leu-29 is disordered. Over residues Gly-7–Arg-18 the composition is skewed to gly residues. A PPM-type phosphatase domain is found at Arg-67 to Phe-331. Residues Asp-111, Gly-112, Asp-279, and Asp-322 each contribute to the Mn(2+) site.

The protein belongs to the PP2C family. Mg(2+) is required as a cofactor. The cofactor is Mn(2+).

The enzyme catalyses O-phospho-L-seryl-[protein] + H2O = L-seryl-[protein] + phosphate. The catalysed reaction is O-phospho-L-threonyl-[protein] + H2O = L-threonyl-[protein] + phosphate. In Oryza sativa subsp. japonica (Rice), this protein is Probable protein phosphatase 2C 57.